The sequence spans 655 residues: Macrolide export ATP-binding/permease protein MacB (655 aa).

Residues 6–244 (IELRDVWREF…DALAGDEGPE (239 aa)) form the ABC transporter domain. 42–49 (GASGSGKS) contacts ATP. The disordered stretch occupies residues 225 to 252 (DQARPDAPPLDALAGDEGPEAPRPAPQP). A run of 4 helical transmembrane segments spans residues 280-300 (LTMLGIIIGIAAVVSVVALGA), 527-547 (LTLLVSMIAVISLVVVGIGVM), 583-603 (VLVCLIGGVLGILLSLSIGVL), and 620-640 (SMVLAFVCSTLIGVAFGFLPA).

The protein belongs to the ABC transporter superfamily. Macrolide exporter (TC 3.A.1.122) family. As to quaternary structure, homodimer.

It localises to the cell inner membrane. Its function is as follows. Non-canonical ABC transporter that contains transmembrane domains (TMD), which form a pore in the inner membrane, and an ATP-binding domain (NBD), which is responsible for energy generation. Confers resistance against macrolides. This chain is Macrolide export ATP-binding/permease protein MacB, found in Bordetella avium (strain 197N).